The following is a 471-amino-acid chain: Eukaryotic translation initiation factor 3 subunit M (471 aa).

Residues 39-61 are disordered; that stretch reads EISSLLEPLRQQEQSEEEPDRKQ. One can recognise a PCI domain in the interval 206 to 377; that stretch reads DFELAQSHVV…SEFLVHRATY (172 aa). Residues 419–471 form a disordered region; the sequence is QAATEEANQGKSGEKGGKGGDRRRNPQHQQQQQQSQPSQPQQPRETELVAGAE. The segment covering 430-442 has biased composition (basic and acidic residues); that stretch reads SGEKGGKGGDRRR. The span at 445 to 461 shows a compositional bias: low complexity; the sequence is QHQQQQQQSQPSQPQQP.

The protein belongs to the eIF-3 subunit M family. Component of the eukaryotic translation initiation factor 3 (eIF-3) complex.

The protein resides in the cytoplasm. Functionally, component of the eukaryotic translation initiation factor 3 (eIF-3) complex, which is involved in protein synthesis of a specialized repertoire of mRNAs and, together with other initiation factors, stimulates binding of mRNA and methionyl-tRNAi to the 40S ribosome. The eIF-3 complex specifically targets and initiates translation of a subset of mRNAs involved in cell proliferation. The sequence is that of Eukaryotic translation initiation factor 3 subunit M from Aspergillus clavatus (strain ATCC 1007 / CBS 513.65 / DSM 816 / NCTC 3887 / NRRL 1 / QM 1276 / 107).